Consider the following 24-residue polypeptide: FLPFIAGMAANFLPKIFCAISKKC.

An intrachain disulfide couples Cys18 to Cys24.

As to expression, expressed by the skin glands.

It is found in the secreted. Functionally, antibacterial activity against Gram-positive bacterium S.aureus and Gram-negative bacterium E.coli. This is Brevinin-1Bf from Lithobates berlandieri (Rio Grande leopard frog).